We begin with the raw amino-acid sequence, 156 residues long: dCTP deaminase (156 aa).

Residues 79 to 84, D95, Q124, and Y138 contribute to the dCTP site; that span reads RSSLAR.

It belongs to the dCTP deaminase family. Homotrimer.

The catalysed reaction is dCTP + H2O + H(+) = dUTP + NH4(+). Its pathway is pyrimidine metabolism; dUMP biosynthesis; dUMP from dCTP (dUTP route): step 1/2. Catalyzes the deamination of dCTP to dUTP. In Pyrococcus furiosus (strain ATCC 43587 / DSM 3638 / JCM 8422 / Vc1), this protein is dCTP deaminase.